Consider the following 515-residue polypeptide: Pisatin demethylase (515 aa).

Heme is bound at residue Cys453.

This sequence belongs to the cytochrome P450 family. The cofactor is heme.

Functionally, can detoxify the phytoalexin pisatin from garden pea. Pisatin is an antimicrobial compound produced by pea in response to infection by plant pathogens. This Fusarium vanettenii (Neocosmospora pisi) protein is Pisatin demethylase (PDAT9).